Here is a 355-residue protein sequence, read N- to C-terminus: Erythronate-4-phosphate dehydrogenase (355 aa).

The substrate site is built by Ser45 and Thr66. Asp146 provides a ligand contact to NAD(+). Residue Arg206 is part of the active site. Residue Asp229 coordinates NAD(+). Glu234 is a catalytic residue. Residue His251 is the Proton donor of the active site. Position 254 (Gly254) interacts with NAD(+). Tyr255 lines the substrate pocket.

Belongs to the D-isomer specific 2-hydroxyacid dehydrogenase family. PdxB subfamily. In terms of assembly, homodimer.

The protein localises to the cytoplasm. It carries out the reaction 4-phospho-D-erythronate + NAD(+) = (R)-3-hydroxy-2-oxo-4-phosphooxybutanoate + NADH + H(+). It participates in cofactor biosynthesis; pyridoxine 5'-phosphate biosynthesis; pyridoxine 5'-phosphate from D-erythrose 4-phosphate: step 2/5. In terms of biological role, catalyzes the oxidation of erythronate-4-phosphate to 3-hydroxy-2-oxo-4-phosphonooxybutanoate. The sequence is that of Erythronate-4-phosphate dehydrogenase from Acinetobacter baumannii (strain SDF).